Consider the following 33-residue polypeptide: Photosystem II reaction center protein Psb30 (33 aa).

A helical transmembrane segment spans residues 5–25; that stretch reads VLAQLTVLTLIVISGPLVIAL.

The protein belongs to the Psb30/Ycf12 family. In terms of assembly, PSII is composed of 1 copy each of membrane proteins PsbA, PsbB, PsbC, PsbD, PsbE, PsbF, PsbH, PsbI, PsbJ, PsbK, PsbL, PsbM, PsbT, PsbX, PsbY, PsbZ, Psb30/Ycf12, peripheral proteins of the oxygen-evolving complex and a large number of cofactors. It forms dimeric complexes.

It localises to the plastid. The protein localises to the chloroplast thylakoid membrane. A core subunit of photosystem II (PSII), probably helps stabilize the reaction center. The sequence is that of Photosystem II reaction center protein Psb30 from Cycas taitungensis (Prince sago).